Consider the following 444-residue polypeptide: Squalene synthase ERG9 (444 aa).

Residues 421–441 form a helical membrane-spanning segment; sequence FNMVLSIILSVLLGFYYIYTL.

This sequence belongs to the phytoene/squalene synthase family. Requires Mg(2+) as cofactor.

The protein localises to the endoplasmic reticulum membrane. Its subcellular location is the microsome. The enzyme catalyses 2 (2E,6E)-farnesyl diphosphate + NADPH + H(+) = squalene + 2 diphosphate + NADP(+). It catalyses the reaction 2 (2E,6E)-farnesyl diphosphate + NADH + H(+) = squalene + 2 diphosphate + NAD(+). It functions in the pathway terpene metabolism; lanosterol biosynthesis; lanosterol from farnesyl diphosphate: step 1/3. In terms of biological role, squalene synthase; part of the third module of ergosterol biosynthesis pathway that includes the late steps of the pathway. ERG9 produces squalene from 2 farnesyl pyrophosphate moieties. The third module or late pathway involves the ergosterol synthesis itself through consecutive reactions that mainly occur in the endoplasmic reticulum (ER) membrane. Firstly, the squalene synthase ERG9 catalyzes the condensation of 2 farnesyl pyrophosphate moieties to form squalene, which is the precursor of all steroids. Squalene synthase is crucial for balancing the incorporation of farnesyl diphosphate (FPP) into sterol and nonsterol isoprene synthesis. Secondly, the squalene epoxidase ERG1 catalyzes the stereospecific oxidation of squalene to (S)-2,3-epoxysqualene, which is considered to be a rate-limiting enzyme in steroid biosynthesis. Then, the lanosterol synthase ERG7 catalyzes the cyclization of (S)-2,3 oxidosqualene to lanosterol, a reaction that forms the sterol core. In the next steps, lanosterol is transformed to zymosterol through a complex process involving various demethylation, reduction and desaturation reactions. The lanosterol 14-alpha-demethylase ERG11 (also known as CYP51) catalyzes C14-demethylation of lanosterol to produce 4,4'-dimethyl cholesta-8,14,24-triene-3-beta-ol, which is critical for ergosterol biosynthesis. The C-14 reductase ERG24 reduces the C14=C15 double bond of 4,4-dimethyl-cholesta-8,14,24-trienol to produce 4,4-dimethyl-cholesta-8,24-dienol. 4,4-dimethyl-cholesta-8,24-dienol is substrate of the C-4 demethylation complex ERG25-ERG26-ERG27 in which ERG25 catalyzes the three-step monooxygenation required for the demethylation of 4,4-dimethyl and 4alpha-methylsterols, ERG26 catalyzes the oxidative decarboxylation that results in a reduction of the 3-beta-hydroxy group at the C-3 carbon to an oxo group, and ERG27 is responsible for the reduction of the keto group on the C-3. ERG28 has a role as a scaffold to help anchor ERG25, ERG26 and ERG27 to the endoplasmic reticulum and ERG29 regulates the activity of the iron-containing C4-methylsterol oxidase ERG25. Then, the sterol 24-C-methyltransferase ERG6 catalyzes the methyl transfer from S-adenosyl-methionine to the C-24 of zymosterol to form fecosterol. The C-8 sterol isomerase ERG2 catalyzes the reaction which results in unsaturation at C-7 in the B ring of sterols and thus converts fecosterol to episterol. The sterol-C5-desaturase ERG3 then catalyzes the introduction of a C-5 double bond in the B ring to produce 5-dehydroepisterol. The C-22 sterol desaturase ERG5 further converts 5-dehydroepisterol into ergosta-5,7,22,24(28)-tetraen-3beta-ol by forming the C-22(23) double bond in the sterol side chain. Finally, ergosta-5,7,22,24(28)-tetraen-3beta-ol is substrate of the C-24(28) sterol reductase ERG4 to produce ergosterol. The protein is Squalene synthase ERG9 of Saccharomyces cerevisiae (strain ATCC 204508 / S288c) (Baker's yeast).